The sequence spans 309 residues: MEKVLVFGHKNPDTDAICSAIAYAELKKELGMNAEPVRLGEISGETQFALDYFKVEGPRFVETVANEVDNVILVDHNERQQSANDIESVRVLEVIDHHRIANFETSDPIYYRCEPVGCTATILNKMYKENGITIRKEVAGLMLSAIISDSLLFKSPTCTEQDVAAARELAEIAGVDADKYGLEMLKAGADLSGKTMEQLISLDAKEFQMGNAKVEIAQVNAVDTNDVLVHQAELEKVISAVVEEKGLDLFLFVVTDILTNDSVGLAIGKAANIVEKAYNVSLENNTATLKGVVSRKKQIVPVLTEAFQA.

Residues His9, Asp13, Asp15, Asp75, His97, and Asp149 each contribute to the Mn(2+) site.

The protein belongs to the PPase class C family. The cofactor is Mn(2+).

It localises to the cytoplasm. It carries out the reaction diphosphate + H2O = 2 phosphate + H(+). This is Probable manganese-dependent inorganic pyrophosphatase from Bacillus cereus (strain AH187).